Reading from the N-terminus, the 205-residue chain is Protein-L-isoaspartate O-methyltransferase (205 aa).

Ser-56 is an active-site residue.

Belongs to the methyltransferase superfamily. L-isoaspartyl/D-aspartyl protein methyltransferase family.

It localises to the cytoplasm. The enzyme catalyses [protein]-L-isoaspartate + S-adenosyl-L-methionine = [protein]-L-isoaspartate alpha-methyl ester + S-adenosyl-L-homocysteine. In terms of biological role, catalyzes the methyl esterification of L-isoaspartyl residues in peptides and proteins that result from spontaneous decomposition of normal L-aspartyl and L-asparaginyl residues. It plays a role in the repair and/or degradation of damaged proteins. The chain is Protein-L-isoaspartate O-methyltransferase from Pyrobaculum aerophilum (strain ATCC 51768 / DSM 7523 / JCM 9630 / CIP 104966 / NBRC 100827 / IM2).